A 395-amino-acid chain; its full sequence is Elongation factor Tu (395 aa).

The tr-type G domain occupies Lys-10–Arg-205. Residues Gly-19 to Thr-26 are G1. Residue Gly-19–Thr-26 participates in GTP binding. Thr-26 serves as a coordination point for Mg(2+). The G2 stretch occupies residues Gly-60–Asn-64. A G3 region spans residues Asp-81–Gly-84. Residues Asp-81–His-85 and Asn-136–Asp-139 contribute to the GTP site. The G4 stretch occupies residues Asn-136 to Asp-139. The segment at Ser-174–Leu-176 is G5.

This sequence belongs to the TRAFAC class translation factor GTPase superfamily. Classic translation factor GTPase family. EF-Tu/EF-1A subfamily. In terms of assembly, monomer.

Its subcellular location is the cytoplasm. The enzyme catalyses GTP + H2O = GDP + phosphate + H(+). Functionally, GTP hydrolase that promotes the GTP-dependent binding of aminoacyl-tRNA to the A-site of ribosomes during protein biosynthesis. The protein is Elongation factor Tu of Hymenobacter ocellatus (Parahymenobacter ocellatus).